Reading from the N-terminus, the 116-residue chain is MAGRSGDSDQELLKAVRYIKILYQSNPYPKPEGTRQARRNRRRRWRARQRQIREISDRILSSCLGRPAEPVPLQLPPLERLHINCSEDCGQGAEEGVGSSQISGESHTVLGSGTKE.

2 positions are modified to phosphoserine; by host CK2: S5 and S8. Residues 18 to 26 (YIKILYQSN) are homomultimerization. Residues 26-48 (NPYPKPEGTRQARRNRRRRWRAR) form a disordered region. The Nuclear localization signal and RNA-binding (RRE) motif lies at 34–50 (TRQARRNRRRRWRARQR). Residues 36-48 (QARRNRRRRWRAR) are compositionally biased toward basic residues. The short motif at 73-84 (LQLPPLERLHIN) is the Nuclear export signal and binding to XPO1 element. Residues 89-116 (CGQGAEEGVGSSQISGESHTVLGSGTKE) form a disordered region. Polar residues predominate over residues 98-116 (GSSQISGESHTVLGSGTKE). S99 is modified (phosphoserine; by host).

It belongs to the HIV-1 REV protein family. In terms of assembly, homomultimer; when bound to the RRE. Multimeric assembly is essential for activity and may involve XPO1. Binds to human KPNB1, XPO1, TNPO1, RANBP5 and IPO7. Interacts with the viral Integrase. Interacts with human KHDRBS1. Interacts with human NAP1; this interaction decreases Rev multimerization and stimulates its activity. Interacts with human DEAD-box helicases DDX3 and DDX24; these interactions may serve for viral RNA export to the cytoplasm and packaging, respectively. Interacts with human PSIP1; this interaction may inhibit HIV-1 DNA integration by promoting dissociation of the Integrase-LEDGF/p75 complex. Post-translationally, asymmetrically arginine dimethylated at one site by host PRMT6. Methylation impairs the RNA-binding activity and export of viral RNA from the nucleus to the cytoplasm. In terms of processing, phosphorylated by protein kinase CK2. Presence of, and maybe binding to the N-terminus of the regulatory beta subunit of CK2 is necessary for CK2-mediated Rev's phosphorylation.

It is found in the host nucleus. Its subcellular location is the host nucleolus. It localises to the host cytoplasm. Escorts unspliced or incompletely spliced viral pre-mRNAs (late transcripts) out of the nucleus of infected cells. These pre-mRNAs carry a recognition sequence called Rev responsive element (RRE) located in the env gene, that is not present in fully spliced viral mRNAs (early transcripts). This function is essential since most viral proteins are translated from unspliced or partially spliced pre-mRNAs which cannot exit the nucleus by the pathway used by fully processed cellular mRNAs. Rev itself is translated from a fully spliced mRNA that readily exits the nucleus. Rev's nuclear localization signal (NLS) binds directly to KPNB1/Importin beta-1 without previous binding to KPNA1/Importin alpha-1. KPNB1 binds to the GDP bound form of RAN (Ran-GDP) and targets Rev to the nucleus. In the nucleus, the conversion from Ran-GDP to Ran-GTP dissociates Rev from KPNB1 and allows Rev's binding to the RRE in viral pre-mRNAs. Rev multimerization on the RRE via cooperative assembly exposes its nuclear export signal (NES) to the surface. Rev can then form a complex with XPO1/CRM1 and Ran-GTP, leading to nuclear export of the complex. Conversion from Ran-GTP to Ran-GDP mediates dissociation of the Rev/RRE/XPO1/RAN complex, so that Rev can return to the nucleus for a subsequent round of export. Beside KPNB1, also seems to interact with TNPO1/Transportin-1, RANBP5/IPO5 and IPO7/RANBP7 for nuclear import. The nucleoporin-like HRB/RIP is an essential cofactor that probably indirectly interacts with Rev to release HIV RNAs from the perinuclear region to the cytoplasm. In Homo sapiens (Human), this protein is Protein Rev.